The following is a 311-amino-acid chain: Apolipoprotein E (311 aa).

An N-terminal signal peptide occupies residues 1-18 (MKVWWAVLAAAILAGCRA). 8 repeat units span residues 74 to 95 (MLME…EQLS), 96 to 116 (PMAQ…GALE), 117 to 138 (ADME…AMLG), 139 to 160 (QSTE…KRLL), 161 to 182 (RDAE…EGAE), 183 to 204 (RGVS…LRVA), 205 to 226 (TVGT…ERLR), and 227 to 248 (GHLE…EQVE). Residues 74 to 248 (MLMEETMKEV…RLNEVREQVE (175 aa)) form an 8 X 22 AA approximate tandem repeats region. Met-136 bears the Methionine sulfoxide mark. The residue at position 140 (Ser-140) is a Phosphoserine. The interval 151–161 (HLRKLRKRLLR) is LDL and other lipoprotein receptors binding. Residue 155-158 (LRKR) participates in heparin binding. The interval 203-283 (VATVGTLAGR…SWFEPLVEDM (81 aa)) is lipid-binding and lipoprotein association. The O-linked (GalNAc...) threonine glycan is linked to Thr-205. 222–229 (GERLRGHL) contributes to the heparin binding site. A homooligomerization region spans residues 259-311 (PQMRLQAEAFQARLKSWFEPLVEDMQRQWAGLVEKLQAAMPSKAPAAAPIENQ). The tract at residues 271-283 (RLKSWFEPLVEDM) is specificity for association with VLDL.

Belongs to the apolipoprotein A1/A4/E family. In terms of assembly, homotetramer. May interact with ABCA1; functionally associated with ABCA1 in the biogenesis of HDLs. May interact with APP/A4 amyloid-beta peptide; the interaction is extremely stable in vitro but its physiological significance is unclear. May interact with MAPT. May interact with MAP2. In the cerebrospinal fluid, interacts with secreted SORL1. Interacts with PMEL; this allows the loading of PMEL luminal fragment on ILVs to induce fibril nucleation. APOE exists as multiple glycosylated and sialylated glycoforms within cells and in plasma. The extent of glycosylation and sialylation are tissue and context specific. Post-translationally, glycated in plasma VLDL. In terms of processing, phosphorylated by FAM20C in the extracellular medium.

The protein resides in the secreted. It localises to the extracellular space. The protein localises to the extracellular matrix. It is found in the extracellular vesicle. Its subcellular location is the endosome. The protein resides in the multivesicular body. APOE is an apolipoprotein, a protein associating with lipid particles, that mainly functions in lipoprotein-mediated lipid transport between organs via the plasma and interstitial fluids. APOE is a core component of plasma lipoproteins and is involved in their production, conversion and clearance. Apolipoproteins are amphipathic molecules that interact both with lipids of the lipoprotein particle core and the aqueous environment of the plasma. As such, APOE associates with chylomicrons, chylomicron remnants, very low density lipoproteins (VLDL) and intermediate density lipoproteins (IDL) but shows a preferential binding to high-density lipoproteins (HDL). It also binds a wide range of cellular receptors including the LDL receptor/LDLR and the very low-density lipoprotein receptor/VLDLR that mediate the cellular uptake of the APOE-containing lipoprotein particles. Finally, APOE also has a heparin-binding activity and binds heparan-sulfate proteoglycans on the surface of cells, a property that supports the capture and the receptor-mediated uptake of APOE-containing lipoproteins by cells. The protein is Apolipoprotein E (APOE) of Oryctolagus cuniculus (Rabbit).